Here is a 241-residue protein sequence, read N- to C-terminus: Thiamine import ATP-binding protein ThiQ (241 aa).

Residues 7 to 235 enclose the ABC transporter domain; sequence IRLSDVRFSY…AGPEALRHYI (229 aa). 37–44 is a binding site for ATP; sequence GPSGSGKS.

It belongs to the ABC transporter superfamily. Thiamine importer (TC 3.A.1.19.1) family. The complex is composed of two ATP-binding proteins (ThiQ), two transmembrane proteins (ThiP) and a solute-binding protein (ThiB).

Its subcellular location is the cell inner membrane. It catalyses the reaction thiamine(out) + ATP + H2O = thiamine(in) + ADP + phosphate + H(+). In terms of biological role, part of the ABC transporter complex ThiBPQ involved in thiamine import. Responsible for energy coupling to the transport system. This Brucella abortus biovar 1 (strain 9-941) protein is Thiamine import ATP-binding protein ThiQ.